Reading from the N-terminus, the 731-residue chain is Elongation factor 2 (731 aa).

The region spanning 19 to 260 (KHIRNIGIVA…MVVHHLPNPL (242 aa)) is the tr-type G domain. Residues 28–35 (AHIDHGKT), 94–98 (DTPGH), and 148–151 (NKVD) contribute to the GTP site. The residue at position 597 (His597) is a Diphthamide.

This sequence belongs to the TRAFAC class translation factor GTPase superfamily. Classic translation factor GTPase family. EF-G/EF-2 subfamily.

The protein localises to the cytoplasm. Its function is as follows. Catalyzes the GTP-dependent ribosomal translocation step during translation elongation. During this step, the ribosome changes from the pre-translocational (PRE) to the post-translocational (POST) state as the newly formed A-site-bound peptidyl-tRNA and P-site-bound deacylated tRNA move to the P and E sites, respectively. Catalyzes the coordinated movement of the two tRNA molecules, the mRNA and conformational changes in the ribosome. This is Elongation factor 2 from Methanoregula boonei (strain DSM 21154 / JCM 14090 / 6A8).